The primary structure comprises 533 residues: Glucosidase 2 subunit beta (533 aa).

The signal sequence occupies residues 1–13 (MLLLLLLLPMCWA). Serine 23 is modified (phosphoserine). LDL-receptor class A domains lie at 36–70 (FTCL…AACP) and 71–112 (NGSF…IVCE). 2 cysteine pairs are disulfide-bonded: cysteine 38/cysteine 57 and cysteine 55/cysteine 69. Aspartate 48 contributes to the substrate binding site. Ca(2+) is bound by residues glutamine 49, aspartate 52, tyrosine 54, aspartate 56, aspartate 62, and glutamate 63. Residue aspartate 52 coordinates substrate. An N-linked (GlcNAc...) asparagine glycan is attached at asparagine 71. Cystine bridges form between cysteine 76/cysteine 98, cysteine 96/cysteine 111, and cysteine 99/cysteine 115. At serine 88 the chain carries Phosphoserine; by PKC. Ca(2+)-binding residues include aspartate 93, valine 95, aspartate 97, aspartate 103, and glutamate 104. The residue at position 165 (lysine 165) is an N6-succinyllysine. Residue serine 167 is modified to Phosphoserine. EF-hand domains are found at residues 208–243 (RERE…DTDG) and 244–279 (DGAL…RDKY). Ca(2+) contacts are provided by aspartate 221, aspartate 223, aspartate 225, and glutamate 232. Positions 284–363 (LPTEYPPSPP…SPTEEDRMPP (80 aa)) are disordered. Residues 312 to 336 (TEEEDEDEEDEETEEDEDEEDEDSQ) are compositionally biased toward acidic residues. 2 positions are modified to phosphoserine; by PKC: serine 388 and serine 395. One can recognise an MRH domain in the interval 418 to 519 (SQCYELTTNE…ELMTPAACPE (102 aa)). An intrachain disulfide couples cysteine 420 to cysteine 433. Residue serine 439 is modified to Phosphoserine; by PKC. Disulfide bonds link cysteine 476–cysteine 505 and cysteine 490–cysteine 517. Asparagine 481 carries an N-linked (GlcNAc...) asparagine glycan. Positions 530–533 (HDEL) match the Prevents secretion from ER motif.

In terms of assembly, heterodimer of a catalytic alpha subunit (GANAB) and a beta subunit (PRKCSH). Binds glycosylated PTPRC. Ubiquitous. Highly expressed in liver, spleen, lung, duodenum, stomach, adrenal gland, pituitary, testis, corpus luteum, uterus and fetal ovary.

It localises to the endoplasmic reticulum. It participates in glycan metabolism; N-glycan metabolism. Functionally, regulatory subunit of glucosidase II that cleaves sequentially the 2 innermost alpha-1,3-linked glucose residues from the Glc(2)Man(9)GlcNAc(2) oligosaccharide precursor of immature glycoproteins. Required for efficient PKD1/Polycystin-1 biogenesis and trafficking to the plasma membrane of the primary cilia. In Bos taurus (Bovine), this protein is Glucosidase 2 subunit beta (PRKCSH).